The chain runs to 258 residues: 4-hydroxy-tetrahydrodipicolinate reductase (258 aa).

NAD(+) contacts are provided by residues 8-13 (GGSGKM), 86-88 (GTT), and 110-113 (ATNM). His-142 serves as the catalytic Proton donor/acceptor. Residue His-143 coordinates (S)-2,3,4,5-tetrahydrodipicolinate. Lys-146 serves as the catalytic Proton donor. Residue 152 to 153 (GT) coordinates (S)-2,3,4,5-tetrahydrodipicolinate.

The protein belongs to the DapB family.

The protein resides in the cytoplasm. It catalyses the reaction (S)-2,3,4,5-tetrahydrodipicolinate + NAD(+) + H2O = (2S,4S)-4-hydroxy-2,3,4,5-tetrahydrodipicolinate + NADH + H(+). The enzyme catalyses (S)-2,3,4,5-tetrahydrodipicolinate + NADP(+) + H2O = (2S,4S)-4-hydroxy-2,3,4,5-tetrahydrodipicolinate + NADPH + H(+). Its pathway is amino-acid biosynthesis; L-lysine biosynthesis via DAP pathway; (S)-tetrahydrodipicolinate from L-aspartate: step 4/4. Catalyzes the conversion of 4-hydroxy-tetrahydrodipicolinate (HTPA) to tetrahydrodipicolinate. The sequence is that of 4-hydroxy-tetrahydrodipicolinate reductase from Campylobacter hominis (strain ATCC BAA-381 / DSM 21671 / CCUG 45161 / LMG 19568 / NCTC 13146 / CH001A).